Here is a 273-residue protein sequence, read N- to C-terminus: Dermonecrotic toxin LapSicTox-alphaII1 (273 aa).

Residue His5 is part of the active site. Residues Glu25 and Asp27 each coordinate Mg(2+). His41 functions as the Nucleophile in the catalytic mechanism. 2 disulfides stabilise this stretch: Cys45/Cys51 and Cys47/Cys191. A Mg(2+)-binding site is contributed by Asp85.

This sequence belongs to the arthropod phospholipase D family. Class II subfamily. Requires Mg(2+) as cofactor. Expressed by the venom gland.

Its subcellular location is the secreted. It catalyses the reaction an N-(acyl)-sphingosylphosphocholine = an N-(acyl)-sphingosyl-1,3-cyclic phosphate + choline. It carries out the reaction an N-(acyl)-sphingosylphosphoethanolamine = an N-(acyl)-sphingosyl-1,3-cyclic phosphate + ethanolamine. The catalysed reaction is a 1-acyl-sn-glycero-3-phosphocholine = a 1-acyl-sn-glycero-2,3-cyclic phosphate + choline. The enzyme catalyses a 1-acyl-sn-glycero-3-phosphoethanolamine = a 1-acyl-sn-glycero-2,3-cyclic phosphate + ethanolamine. In terms of biological role, dermonecrotic toxins cleave the phosphodiester linkage between the phosphate and headgroup of certain phospholipids (sphingolipid and lysolipid substrates), forming an alcohol (often choline) and a cyclic phosphate. This toxin acts on sphingomyelin (SM). It may also act on ceramide phosphoethanolamine (CPE), lysophosphatidylcholine (LPC) and lysophosphatidylethanolamine (LPE), but not on lysophosphatidylserine (LPS), and lysophosphatidylglycerol (LPG). It acts by transphosphatidylation, releasing exclusively cyclic phosphate products as second products. Induces dermonecrosis, hemolysis, increased vascular permeability, edema, inflammatory response, and platelet aggregation. The sequence is that of Dermonecrotic toxin LapSicTox-alphaII1 from Loxosceles apachea (Apache recluse spider).